A 146-amino-acid polypeptide reads, in one-letter code: Large ribosomal subunit protein bL19 (146 aa).

The segment at 116–146 (ADRKRIDQDRAAERAAKEEAQKAQEPKASQE) is disordered. Over residues 119 to 146 (KRIDQDRAAERAAKEEAQKAQEPKASQE) the composition is skewed to basic and acidic residues.

In terms of assembly, part of the 50S risobomal subunit. Contacts protein L14. Forms a bridge to the 30S subunit in the 70S ribosome, contacting the 16S rRNA.

Contacts the 16S rRNA of the 30S subunit (part of bridge B6), connecting the 2 subunits. This Thermus thermophilus (strain ATCC 27634 / DSM 579 / HB8) protein is Large ribosomal subunit protein bL19 (rplS).